Reading from the N-terminus, the 223-residue chain is Deoxyribose-phosphate aldolase (223 aa).

The active-site Proton donor/acceptor is Asp-89. Residue Lys-154 is the Schiff-base intermediate with acetaldehyde of the active site. Residue Lys-183 is the Proton donor/acceptor of the active site.

The protein belongs to the DeoC/FbaB aldolase family. DeoC type 1 subfamily.

Its subcellular location is the cytoplasm. It carries out the reaction 2-deoxy-D-ribose 5-phosphate = D-glyceraldehyde 3-phosphate + acetaldehyde. Its pathway is carbohydrate degradation; 2-deoxy-D-ribose 1-phosphate degradation; D-glyceraldehyde 3-phosphate and acetaldehyde from 2-deoxy-alpha-D-ribose 1-phosphate: step 2/2. Catalyzes a reversible aldol reaction between acetaldehyde and D-glyceraldehyde 3-phosphate to generate 2-deoxy-D-ribose 5-phosphate. This is Deoxyribose-phosphate aldolase from Thermoanaerobacter pseudethanolicus (strain ATCC 33223 / 39E) (Clostridium thermohydrosulfuricum).